The sequence spans 124 residues: Fluoride-specific ion channel FluC (124 aa).

Helical transmembrane passes span 3–23 (VLLI…VSNL), 34–54 (IGTL…FIFI), 68–88 (LLLI…IETF), and 100–120 (ALNV…GVLI). Na(+) contacts are provided by G75 and T78.

The protein belongs to the fluoride channel Fluc/FEX (TC 1.A.43) family.

It is found in the cell inner membrane. The catalysed reaction is fluoride(in) = fluoride(out). Its activity is regulated as follows. Na(+) is not transported, but it plays an essential structural role and its presence is essential for fluoride channel function. Functionally, fluoride-specific ion channel. Important for reducing fluoride concentration in the cell, thus reducing its toxicity. This chain is Fluoride-specific ion channel FluC, found in Coxiella burnetii (strain Dugway 5J108-111).